Here is a 366-residue protein sequence, read N- to C-terminus: Beta sliding clamp (366 aa).

This sequence belongs to the beta sliding clamp family. In terms of assembly, forms a ring-shaped head-to-tail homodimer around DNA which binds and tethers DNA polymerases and other proteins to the DNA. The DNA replisome complex has a single clamp-loading complex (3 tau and 1 each of delta, delta', psi and chi subunits) which binds 3 Pol III cores (1 core on the leading strand and 2 on the lagging strand) each with a beta sliding clamp dimer. Additional proteins in the replisome are other copies of gamma, psi and chi, Ssb, DNA helicase and RNA primase.

It localises to the cytoplasm. Functionally, confers DNA tethering and processivity to DNA polymerases and other proteins. Acts as a clamp, forming a ring around DNA (a reaction catalyzed by the clamp-loading complex) which diffuses in an ATP-independent manner freely and bidirectionally along dsDNA. Initially characterized for its ability to contact the catalytic subunit of DNA polymerase III (Pol III), a complex, multichain enzyme responsible for most of the replicative synthesis in bacteria; Pol III exhibits 3'-5' exonuclease proofreading activity. The beta chain is required for initiation of replication as well as for processivity of DNA replication. This Vibrio cholerae serotype O1 (strain ATCC 39315 / El Tor Inaba N16961) protein is Beta sliding clamp (dnaN).